Here is a 349-residue protein sequence, read N- to C-terminus: Carbamoyl phosphate synthase small chain (349 aa).

The interval 1–170 is CPSase; it reads MKAKLILENG…KYEISGEGKK (170 aa). Residues Ser45, Gly218, and Gly220 each contribute to the L-glutamine site. The Glutamine amidotransferase type-1 domain occupies 170-349; the sequence is KVAIIDFGIK…IFDEFMKYAL (180 aa). Residue Cys245 is the Nucleophile of the active site. Positions 246, 249, 287, 289, and 290 each coordinate L-glutamine. Catalysis depends on residues His327 and Glu329.

It belongs to the CarA family. In terms of assembly, composed of two chains; the small (or glutamine) chain promotes the hydrolysis of glutamine to ammonia, which is used by the large (or ammonia) chain to synthesize carbamoyl phosphate. Tetramer of heterodimers (alpha,beta)4.

The catalysed reaction is hydrogencarbonate + L-glutamine + 2 ATP + H2O = carbamoyl phosphate + L-glutamate + 2 ADP + phosphate + 2 H(+). It catalyses the reaction L-glutamine + H2O = L-glutamate + NH4(+). It functions in the pathway amino-acid biosynthesis; L-arginine biosynthesis; carbamoyl phosphate from bicarbonate: step 1/1. The protein operates within pyrimidine metabolism; UMP biosynthesis via de novo pathway; (S)-dihydroorotate from bicarbonate: step 1/3. In terms of biological role, small subunit of the glutamine-dependent carbamoyl phosphate synthetase (CPSase). CPSase catalyzes the formation of carbamoyl phosphate from the ammonia moiety of glutamine, carbonate, and phosphate donated by ATP, constituting the first step of 2 biosynthetic pathways, one leading to arginine and/or urea and the other to pyrimidine nucleotides. The small subunit (glutamine amidotransferase) binds and cleaves glutamine to supply the large subunit with the substrate ammonia. The chain is Carbamoyl phosphate synthase small chain from Clostridium perfringens (strain 13 / Type A).